The chain runs to 190 residues: Peptidyl-tRNA hydrolase (190 aa).

TRNA is bound at residue Tyr14. His19 serves as the catalytic Proton acceptor. TRNA is bound by residues Tyr64, Asn66, and Asn112.

This sequence belongs to the PTH family. As to quaternary structure, monomer.

The protein localises to the cytoplasm. The catalysed reaction is an N-acyl-L-alpha-aminoacyl-tRNA + H2O = an N-acyl-L-amino acid + a tRNA + H(+). Its function is as follows. Hydrolyzes ribosome-free peptidyl-tRNAs (with 1 or more amino acids incorporated), which drop off the ribosome during protein synthesis, or as a result of ribosome stalling. Functionally, catalyzes the release of premature peptidyl moieties from peptidyl-tRNA molecules trapped in stalled 50S ribosomal subunits, and thus maintains levels of free tRNAs and 50S ribosomes. The protein is Peptidyl-tRNA hydrolase of Chlorobaculum parvum (strain DSM 263 / NCIMB 8327) (Chlorobium vibrioforme subsp. thiosulfatophilum).